Consider the following 343-residue polypeptide: MGIRISHLRKQFASFTALDDITLDVRQGELLALLGPSGSGKTTLLRIMAGLEHADGGQVLFGDEDATRMSVQSRRVGFVFQHYALFKHMDVFENIAFGLRVRRGKERWAEARIRARVEELLALVQLQGLEQRYPTQLSGGQRQRVALARALAIEPRVLLLDEPFGALDAQVRRDLRRWLRELHEQTGLTTVFVTHDQEEALELADRVAILNRGRIEQLDTPARVYDTPASPFVYSFVGAVNRIPGVLAHGQIQVAGHALPSANPALAAGPVEVYVRPEDLVPDADGWPATVAWAQRSGARLRVRAILDAAGNEVEVELPASAGTITAGQQLRLAARHYGVFPA.

In terms of domain architecture, ABC transporter spans 3-237 (IRISHLRKQF…PASPFVYSFV (235 aa)). 35 to 42 (GPSGSGKT) serves as a coordination point for ATP.

Belongs to the ABC transporter superfamily. Sulfate/tungstate importer (TC 3.A.1.6) family. In terms of assembly, the complex is composed of two ATP-binding proteins (CysA), two transmembrane proteins (CysT and CysW) and a solute-binding protein (CysP).

The protein localises to the cell inner membrane. It catalyses the reaction sulfate(out) + ATP + H2O = sulfate(in) + ADP + phosphate + H(+). The enzyme catalyses thiosulfate(out) + ATP + H2O = thiosulfate(in) + ADP + phosphate + H(+). In terms of biological role, part of the ABC transporter complex CysAWTP involved in sulfate/thiosulfate import. Responsible for energy coupling to the transport system. This chain is Sulfate/thiosulfate import ATP-binding protein CysA, found in Xanthomonas campestris pv. campestris (strain ATCC 33913 / DSM 3586 / NCPPB 528 / LMG 568 / P 25).